The primary structure comprises 366 residues: Chorismate synthase (366 aa).

Positions 48 and 54 each coordinate NADP(+). Residues 125–127 (RSS), 238–239 (NA), glycine 278, 293–297 (KPTSS), and arginine 319 contribute to the FMN site.

The protein belongs to the chorismate synthase family. As to quaternary structure, homotetramer. Requires FMNH2 as cofactor.

The enzyme catalyses 5-O-(1-carboxyvinyl)-3-phosphoshikimate = chorismate + phosphate. The protein operates within metabolic intermediate biosynthesis; chorismate biosynthesis; chorismate from D-erythrose 4-phosphate and phosphoenolpyruvate: step 7/7. Functionally, catalyzes the anti-1,4-elimination of the C-3 phosphate and the C-6 proR hydrogen from 5-enolpyruvylshikimate-3-phosphate (EPSP) to yield chorismate, which is the branch point compound that serves as the starting substrate for the three terminal pathways of aromatic amino acid biosynthesis. This reaction introduces a second double bond into the aromatic ring system. In Paraburkholderia xenovorans (strain LB400), this protein is Chorismate synthase.